The chain runs to 102 residues: NADH-quinone oxidoreductase subunit K (102 aa).

The next 3 helical transmembrane spans lie at 6 to 26 (LEHG…GLMV), 30 to 50 (ILFV…AFVV), and 62 to 82 (VMFI…LAIL).

Belongs to the complex I subunit 4L family. NDH-1 is composed of 13 different subunits. Subunits NuoA, H, J, K, L, M, N constitute the membrane sector of the complex.

The protein resides in the cell inner membrane. The catalysed reaction is a quinone + NADH + 5 H(+)(in) = a quinol + NAD(+) + 4 H(+)(out). Functionally, NDH-1 shuttles electrons from NADH, via FMN and iron-sulfur (Fe-S) centers, to quinones in the respiratory chain. The immediate electron acceptor for the enzyme in this species is believed to be ubiquinone. Couples the redox reaction to proton translocation (for every two electrons transferred, four hydrogen ions are translocated across the cytoplasmic membrane), and thus conserves the redox energy in a proton gradient. The protein is NADH-quinone oxidoreductase subunit K of Pseudomonas putida (strain ATCC 700007 / DSM 6899 / JCM 31910 / BCRC 17059 / LMG 24140 / F1).